The following is a 623-amino-acid chain: EIN3-binding F-box protein 2 (623 aa).

Positions 52 to 106 (QTSIDVLPEECLFEILRRLPSGQERSACACVSKHWLNLLSSISRSEVNESSVQDV) constitute an F-box domain. 18 LRR repeats span residues 119 to 147 (GKKA…QIRG), 151 to 176 (ESKV…SLWN), 177 to 202 (LPAV…DLSR), 203 to 228 (CPGI…TIDS), 229 to 254 (CSGV…SIRS), 255 to 281 (CPRI…KLQM), 307 to 334 (LQGV…SVMS), 335 to 360 (CRGM…SLNK), 361 to 386 (CLLV…KLEE), 387 to 413 (CHRI…SLAN), 414 to 441 (CLGI…SIRC), 442 to 467 (CPGF…ELCG), 468 to 494 (LNGV…NLSE), 495 to 521 (CINV…NLDG), 522 to 547 (CKNI…DISN), 548 to 574 (TLVS…SIGG), 575 to 600 (CSSI…NIQR), and 601 to 623 (CGRI…DILY).

As to quaternary structure, part of a SCF (SKP1-cullin-F-box) protein ligase complex. Interacts with CUL1, SKP1A/ASK1, SKP1B/ASK2, EIN3, and EIL1. Ubiquitous.

The protein resides in the nucleus. Its pathway is protein modification; protein ubiquitination. Its function is as follows. Component of SCF(EBF1) E3 ubiquitin ligase complexes, which may mediate the ubiquitination and subsequent proteasomal degradation of target proteins (probably including EIN3 and EIL1). Regulator of the ethylene signaling cascade by modulating the stability of EIN3 and EIL1 proteins. In Arabidopsis thaliana (Mouse-ear cress), this protein is EIN3-binding F-box protein 2 (EBF2).